The following is a 101-amino-acid chain: Small ribosomal subunit protein uS14A (101 aa).

Disordered stretches follow at residues 1–20 (MAKKSKIAKNDRRQETVARY) and 28–72 (TEII…RPRG). Basic and acidic residues-rich tracts occupy residues 38 to 53 (EAERRAAQQELRRQPR) and 61 to 70 (RNRDSVDGRP).

It belongs to the universal ribosomal protein uS14 family. Part of the 30S ribosomal subunit. Contacts proteins S3 and S10.

Functionally, binds 16S rRNA, required for the assembly of 30S particles and may also be responsible for determining the conformation of the 16S rRNA at the A site. This chain is Small ribosomal subunit protein uS14A, found in Streptomyces avermitilis (strain ATCC 31267 / DSM 46492 / JCM 5070 / NBRC 14893 / NCIMB 12804 / NRRL 8165 / MA-4680).